The primary structure comprises 138 residues: Gastrula zinc finger protein XlCGF44.2 (138 aa).

5 consecutive C2H2-type zinc fingers follow at residues 5-27 (FACTKCKRRFCSNKELFSHKRIH), 32-54 (FVCAVCGKYFSDRIILQAHQRLH), 60-82 (FTCTQCHKSFLYKRNLHQHQQIH), 88-110 (YVCSTCGKQLKSKLTLNQHMKTH), and 116-138 (FACSECSKSFRFKAHLHRHQESH).

It belongs to the krueppel C2H2-type zinc-finger protein family.

The protein localises to the nucleus. Its function is as follows. May be involved in transcriptional regulation. The protein is Gastrula zinc finger protein XlCGF44.2 of Xenopus laevis (African clawed frog).